Reading from the N-terminus, the 364-residue chain is N-acetyl-gamma-glutamyl-phosphate reductase (364 aa).

The active site involves C157.

It belongs to the NAGSA dehydrogenase family. Type 1 subfamily.

The protein localises to the cytoplasm. It carries out the reaction N-acetyl-L-glutamate 5-semialdehyde + phosphate + NADP(+) = N-acetyl-L-glutamyl 5-phosphate + NADPH + H(+). Its pathway is amino-acid biosynthesis; L-arginine biosynthesis; N(2)-acetyl-L-ornithine from L-glutamate: step 3/4. Its function is as follows. Catalyzes the NADPH-dependent reduction of N-acetyl-5-glutamyl phosphate to yield N-acetyl-L-glutamate 5-semialdehyde. The sequence is that of N-acetyl-gamma-glutamyl-phosphate reductase from Bifidobacterium longum (strain DJO10A).